A 586-amino-acid chain; its full sequence is Actin-related protein 9 (586 aa).

Positions 141 to 169 are disordered; sequence STPIVDKDADVDPLQRSTPDDTEPNSEEN.

It belongs to the actin family. ARP8 subfamily.

The sequence is that of Actin-related protein 9 (ARP9) from Oryza sativa subsp. indica (Rice).